A 162-amino-acid chain; its full sequence is Ribosome maturation factor RimP (162 aa).

The protein belongs to the RimP family.

It is found in the cytoplasm. Its function is as follows. Required for maturation of 30S ribosomal subunits. The polypeptide is Ribosome maturation factor RimP (Streptococcus gordonii (strain Challis / ATCC 35105 / BCRC 15272 / CH1 / DL1 / V288)).